Consider the following 349-residue polypeptide: N-acetyltaurine hydrolase (349 aa).

Positions 26, 28, 169, 201, 230, and 298 each coordinate a divalent metal cation.

The protein belongs to the metallo-dependent hydrolases superfamily. Phosphotriesterase family. It depends on a divalent metal cation as a cofactor.

The protein resides in the cytoplasm. The protein localises to the cytosol. The enzyme catalyses N-acetyltaurine + H2O = taurine + acetate. It carries out the reaction N-propanoyltaurine + H2O = propanoate + taurine. It catalyses the reaction N-acetyl-L-methionine + H2O = L-methionine + acetate. The catalysed reaction is N-acetyl-L-isoleucine + H2O = L-isoleucine + acetate. The enzyme catalyses N-acetyl-L-leucine + H2O = L-leucine + acetate. It carries out the reaction N-acetyl-L-valine + H2O = L-valine + acetate. N-acetyltaurine hydrolase that catalyzes the hydrolysis of N-acetyltaurine into taurine and acetate. PTER also acts on other N-acetyl amino acids (Met, Ile, Leu, Val) and N-propionyltaurine, but at lower rates. The sequence is that of N-acetyltaurine hydrolase (pter) from Salmo salar (Atlantic salmon).